Consider the following 181-residue polypeptide: TATA-box-binding protein (181 aa).

Repeat copies occupy residues Ile-7–Leu-83 and Val-98–Leu-173.

The protein belongs to the TBP family.

General factor that plays a role in the activation of archaeal genes transcribed by RNA polymerase. Binds specifically to the TATA box promoter element which lies close to the position of transcription initiation. The protein is TATA-box-binding protein of Methanococcus maripaludis (strain C7 / ATCC BAA-1331).